We begin with the raw amino-acid sequence, 361 residues long: Phosphoserine aminotransferase (361 aa).

R43 provides a ligand contact to L-glutamate. Pyridoxal 5'-phosphate is bound by residues 77–78 (AS), W103, T153, D172, and Q195. The residue at position 196 (K196) is an N6-(pyridoxal phosphate)lysine. 237 to 238 (NT) contacts pyridoxal 5'-phosphate.

It belongs to the class-V pyridoxal-phosphate-dependent aminotransferase family. SerC subfamily. As to quaternary structure, homodimer. Pyridoxal 5'-phosphate serves as cofactor.

The protein resides in the cytoplasm. The catalysed reaction is O-phospho-L-serine + 2-oxoglutarate = 3-phosphooxypyruvate + L-glutamate. The enzyme catalyses 4-(phosphooxy)-L-threonine + 2-oxoglutarate = (R)-3-hydroxy-2-oxo-4-phosphooxybutanoate + L-glutamate. The protein operates within amino-acid biosynthesis; L-serine biosynthesis; L-serine from 3-phospho-D-glycerate: step 2/3. It functions in the pathway cofactor biosynthesis; pyridoxine 5'-phosphate biosynthesis; pyridoxine 5'-phosphate from D-erythrose 4-phosphate: step 3/5. Its function is as follows. Catalyzes the reversible conversion of 3-phosphohydroxypyruvate to phosphoserine and of 3-hydroxy-2-oxo-4-phosphonooxybutanoate to phosphohydroxythreonine. In Desulfotalea psychrophila (strain LSv54 / DSM 12343), this protein is Phosphoserine aminotransferase.